Here is a 235-residue protein sequence, read N- to C-terminus: Uridylate kinase (235 aa).

8 to 11 (KLSG) is an ATP binding site. Gly-49 is a binding site for UMP. Positions 50 and 54 each coordinate ATP. 131–138 (TGNPYFST) contacts UMP. ATP is bound by residues Asn-159, Tyr-165, and Asp-168.

Belongs to the UMP kinase family. In terms of assembly, homohexamer.

The protein localises to the cytoplasm. It catalyses the reaction UMP + ATP = UDP + ADP. Its pathway is pyrimidine metabolism; CTP biosynthesis via de novo pathway; UDP from UMP (UMPK route): step 1/1. With respect to regulation, inhibited by UTP. Its function is as follows. Catalyzes the reversible phosphorylation of UMP to UDP. This chain is Uridylate kinase, found in Mycoplasma pneumoniae (strain ATCC 29342 / M129 / Subtype 1) (Mycoplasmoides pneumoniae).